A 437-amino-acid chain; its full sequence is Enolase (437 aa).

Q162 lines the (2R)-2-phosphoglycerate pocket. Residue E204 is the Proton donor of the active site. Residues D251, E297, and D324 each coordinate Mg(2+). Positions 349, 378, 379, and 400 each coordinate (2R)-2-phosphoglycerate. Catalysis depends on K349, which acts as the Proton acceptor.

The protein belongs to the enolase family. Mg(2+) serves as cofactor.

The protein localises to the cytoplasm. It is found in the secreted. Its subcellular location is the cell surface. It carries out the reaction (2R)-2-phosphoglycerate = phosphoenolpyruvate + H2O. The protein operates within carbohydrate degradation; glycolysis; pyruvate from D-glyceraldehyde 3-phosphate: step 4/5. In terms of biological role, catalyzes the reversible conversion of 2-phosphoglycerate (2-PG) into phosphoenolpyruvate (PEP). It is essential for the degradation of carbohydrates via glycolysis. The chain is Enolase from Chlorobium phaeobacteroides (strain DSM 266 / SMG 266 / 2430).